Reading from the N-terminus, the 328-residue chain is Ketol-acid reductoisomerase (NADP(+)) (328 aa).

A KARI N-terminal Rossmann domain is found at Ala-2 to Thr-182. Residues Tyr-25–Gln-28, Arg-48, Ser-53, and Asp-83–Gln-86 each bind NADP(+). His-108 is an active-site residue. Gly-134 lines the NADP(+) pocket. The region spanning Thr-183–Pro-328 is the KARI C-terminal knotted domain. Residues Asp-191, Glu-195, Glu-227, and Glu-231 each contribute to the Mg(2+) site. A substrate-binding site is contributed by Ser-252.

The protein belongs to the ketol-acid reductoisomerase family. Mg(2+) is required as a cofactor.

It catalyses the reaction (2R)-2,3-dihydroxy-3-methylbutanoate + NADP(+) = (2S)-2-acetolactate + NADPH + H(+). It carries out the reaction (2R,3R)-2,3-dihydroxy-3-methylpentanoate + NADP(+) = (S)-2-ethyl-2-hydroxy-3-oxobutanoate + NADPH + H(+). The protein operates within amino-acid biosynthesis; L-isoleucine biosynthesis; L-isoleucine from 2-oxobutanoate: step 2/4. It functions in the pathway amino-acid biosynthesis; L-valine biosynthesis; L-valine from pyruvate: step 2/4. In terms of biological role, involved in the biosynthesis of branched-chain amino acids (BCAA). Catalyzes an alkyl-migration followed by a ketol-acid reduction of (S)-2-acetolactate (S2AL) to yield (R)-2,3-dihydroxy-isovalerate. In the isomerase reaction, S2AL is rearranged via a Mg-dependent methyl migration to produce 3-hydroxy-3-methyl-2-ketobutyrate (HMKB). In the reductase reaction, this 2-ketoacid undergoes a metal-dependent reduction by NADPH to yield (R)-2,3-dihydroxy-isovalerate. This is Ketol-acid reductoisomerase (NADP(+)) from Pyrobaculum calidifontis (strain DSM 21063 / JCM 11548 / VA1).